The chain runs to 100 residues: Replication restart protein PriB (100 aa).

Residues 1–100 form the SSB domain; it reads MTNRMELSGT…VLHADDIIHI (100 aa).

This sequence belongs to the PriB family. Homodimer. Interacts with PriA and DnaT. Component of the replication restart primosome. Primosome assembly occurs via a 'hand-off' mechanism. PriA binds to replication forks, subsequently PriB then DnaT bind; DnaT then displaces ssDNA to generate the helicase loading substrate.

Its function is as follows. Involved in the restart of stalled replication forks, which reloads the replicative helicase on sites other than the origin of replication; the PriA-PriB pathway is the major replication restart pathway. During primosome assembly it facilitates complex formation between PriA and DnaT on DNA; stabilizes PriA on DNA. Stimulates the DNA unwinding activity of PriA helicase. The sequence is that of Replication restart protein PriB from Vibrio vulnificus (strain CMCP6).